The chain runs to 95 residues: Co-chaperonin GroES (95 aa).

Belongs to the GroES chaperonin family. In terms of assembly, heptamer of 7 subunits arranged in a ring. Interacts with the chaperonin GroEL.

The protein localises to the cytoplasm. Together with the chaperonin GroEL, plays an essential role in assisting protein folding. The GroEL-GroES system forms a nano-cage that allows encapsulation of the non-native substrate proteins and provides a physical environment optimized to promote and accelerate protein folding. GroES binds to the apical surface of the GroEL ring, thereby capping the opening of the GroEL channel. The chain is Co-chaperonin GroES from Rickettsia conorii (strain ATCC VR-613 / Malish 7).